A 186-amino-acid polypeptide reads, in one-letter code: MVEELPSVFLVGPMGAGKTTIGRLLAKQLGRTFVDSDWYVESQTGADIAWIFDKEGEAGFRERETRAIDELTQQPQIVLATGGGAVMAAENREFLKQRGIVIYLNAPVDVQMARTAKDKSRPLLQQPNPRKILQGLYSARDPLYRQVAHIIMPTGHTYPRHMVNQLLQQLNSFCASTSVVSEPEKD.

15–20 contributes to the ATP binding site; the sequence is GAGKTT. Residue T19 coordinates Mg(2+). Substrate is bound by residues D37, R61, and G83. An ATP-binding site is contributed by R121. R140 lines the substrate pocket.

Belongs to the shikimate kinase family. As to quaternary structure, monomer. It depends on Mg(2+) as a cofactor.

The protein localises to the cytoplasm. It catalyses the reaction shikimate + ATP = 3-phosphoshikimate + ADP + H(+). It participates in metabolic intermediate biosynthesis; chorismate biosynthesis; chorismate from D-erythrose 4-phosphate and phosphoenolpyruvate: step 5/7. Its function is as follows. Catalyzes the specific phosphorylation of the 3-hydroxyl group of shikimic acid using ATP as a cosubstrate. The polypeptide is Shikimate kinase (Psychrobacter arcticus (strain DSM 17307 / VKM B-2377 / 273-4)).